Consider the following 210-residue polypeptide: Ribosomal RNA large subunit methyltransferase E (210 aa).

Residues glycine 55, tryptophan 57, aspartate 75, aspartate 93, and aspartate 117 each contribute to the S-adenosyl-L-methionine site. Catalysis depends on lysine 157, which acts as the Proton acceptor. The tract at residues 175–210 is disordered; that stretch reads YRQVKTTKPPSSRKKSSEMYVVGLDFKPKKNKKSKD.

The protein belongs to the class I-like SAM-binding methyltransferase superfamily. RNA methyltransferase RlmE family.

The protein resides in the cytoplasm. It catalyses the reaction uridine(2552) in 23S rRNA + S-adenosyl-L-methionine = 2'-O-methyluridine(2552) in 23S rRNA + S-adenosyl-L-homocysteine + H(+). Specifically methylates the uridine in position 2552 of 23S rRNA at the 2'-O position of the ribose in the fully assembled 50S ribosomal subunit. This Methanobrevibacter smithii (strain ATCC 35061 / DSM 861 / OCM 144 / PS) protein is Ribosomal RNA large subunit methyltransferase E.